A 95-amino-acid chain; its full sequence is Aspartyl/glutamyl-tRNA(Asn/Gln) amidotransferase subunit C (95 aa).

It belongs to the GatC family. Heterotrimer of A, B and C subunits.

The catalysed reaction is L-glutamyl-tRNA(Gln) + L-glutamine + ATP + H2O = L-glutaminyl-tRNA(Gln) + L-glutamate + ADP + phosphate + H(+). It catalyses the reaction L-aspartyl-tRNA(Asn) + L-glutamine + ATP + H2O = L-asparaginyl-tRNA(Asn) + L-glutamate + ADP + phosphate + 2 H(+). Allows the formation of correctly charged Asn-tRNA(Asn) or Gln-tRNA(Gln) through the transamidation of misacylated Asp-tRNA(Asn) or Glu-tRNA(Gln) in organisms which lack either or both of asparaginyl-tRNA or glutaminyl-tRNA synthetases. The reaction takes place in the presence of glutamine and ATP through an activated phospho-Asp-tRNA(Asn) or phospho-Glu-tRNA(Gln). The chain is Aspartyl/glutamyl-tRNA(Asn/Gln) amidotransferase subunit C from Rhizobium rhizogenes (strain K84 / ATCC BAA-868) (Agrobacterium radiobacter).